The sequence spans 109 residues: Spermidine export protein MdtI (109 aa).

4 consecutive transmembrane segments (helical) span residues 6 to 26 (WWHA…NILL), 36 to 56 (WMGI…AQAV), 63 to 83 (IAYA…GWIM), and 88 to 108 (LNYK…MIKM).

This sequence belongs to the drug/metabolite transporter (DMT) superfamily. Small multidrug resistance (SMR) (TC 2.A.7.1) family. MdtI subfamily. In terms of assembly, forms a complex with MdtJ.

It is found in the cell inner membrane. In terms of biological role, catalyzes the excretion of spermidine. The chain is Spermidine export protein MdtI from Photorhabdus laumondii subsp. laumondii (strain DSM 15139 / CIP 105565 / TT01) (Photorhabdus luminescens subsp. laumondii).